A 643-amino-acid polypeptide reads, in one-letter code: Threonine--tRNA ligase (643 aa).

One can recognise a TGS domain in the interval 1-61 (MIKITLKDGS…NEDSSLEICT (61 aa)). Residues 240–540 (DHNKLGRELG…LIEKYAGALP (301 aa)) are catalytic. Residues C335, H386, and H517 each coordinate Zn(2+).

It belongs to the class-II aminoacyl-tRNA synthetase family. In terms of assembly, homodimer. Requires Zn(2+) as cofactor.

The protein localises to the cytoplasm. The catalysed reaction is tRNA(Thr) + L-threonine + ATP = L-threonyl-tRNA(Thr) + AMP + diphosphate + H(+). Functionally, catalyzes the attachment of threonine to tRNA(Thr) in a two-step reaction: L-threonine is first activated by ATP to form Thr-AMP and then transferred to the acceptor end of tRNA(Thr). Also edits incorrectly charged L-seryl-tRNA(Thr). In Clostridium perfringens (strain SM101 / Type A), this protein is Threonine--tRNA ligase.